Consider the following 549-residue polypeptide: Plant intracellular Ras-group-related LRR protein 4 (549 aa).

A compositionally biased stretch (low complexity) spans 119–140 (SPSSNGSVSSRPPLPPATTTAA). The tract at residues 119 to 167 (SPSSNGSVSSRPPLPPATTTAARSDSQSSLNFSERAPVRPKDMVSRDDS) is disordered. The span at 141–150 (RSDSQSSLNF) shows a compositional bias: polar residues. Basic and acidic residues predominate over residues 154 to 167 (APVRPKDMVSRDDS). At S167 the chain carries Phosphoserine. 11 LRR repeats span residues 245 to 268 (LSSL…IGGL), 269 to 291 (SSLT…IGEL), 293 to 313 (NLVY…AFSR), 314 to 337 (LVRL…IGSL), 339 to 360 (SLKK…IGGC), 362 to 383 (SLIE…IGKI), 384 to 406 (TTLE…MSSL), 407 to 430 (ASLK…CFAT), 432 to 454 (LVKL…IGNL), 455 to 476 (EMLE…SFKM), and 478 to 500 (TKLR…IAEK). Residues 501–508 (GPQAVVQY) carry the GVYW; degenerate motif.

Belongs to the SHOC2 family. As to expression, widely expressed.

Functionally, leucine-rich repeat protein that likely mediates protein interactions, possibly in the context of signal transduction. The protein is Plant intracellular Ras-group-related LRR protein 4 (PIRL4) of Arabidopsis thaliana (Mouse-ear cress).